Reading from the N-terminus, the 118-residue chain is Small ribosomal subunit protein uS13 (118 aa).

The tract at residues 91–118 is disordered; that stretch reads HRRGLPVRGQRTKTNARTRKGPRKPIKK.

This sequence belongs to the universal ribosomal protein uS13 family. Part of the 30S ribosomal subunit. Forms a loose heterodimer with protein S19. Forms two bridges to the 50S subunit in the 70S ribosome.

Located at the top of the head of the 30S subunit, it contacts several helices of the 16S rRNA. In the 70S ribosome it contacts the 23S rRNA (bridge B1a) and protein L5 of the 50S subunit (bridge B1b), connecting the 2 subunits; these bridges are implicated in subunit movement. Contacts the tRNAs in the A and P-sites. This chain is Small ribosomal subunit protein uS13, found in Hamiltonella defensa subsp. Acyrthosiphon pisum (strain 5AT).